The sequence spans 269 residues: Protein TIFY 11B (269 aa).

Positions 100-135 (PESGNSQLTIFFGGKVMVFNEFPEDKAKEIMEVAKE) constitute a Tify domain. The interval 160 to 181 (PDLNEPTSSGNNEDQETGQQHQ) is disordered. Positions 164–181 (EPTSSGNNEDQETGQQHQ) are enriched in polar residues. The short motif at 186–210 (IARRASLHRFFAKRKDRAVARAPYQ) is the Jas element. The short motif at 187 to 194 (ARRASLHR) is the Nuclear localization signal element. Residues 209-269 (YQVNQHGSHL…QSSKNLELKL (61 aa)) form a disordered region. Basic and acidic residues predominate over residues 250–269 (MPMEVDKKEGQSSKNLELKL).

Belongs to the TIFY/JAZ family. In terms of assembly, homo- and heterodimer. Interacts with MYC2, AFPH2/NINJA, TIFY10A/JAZ1, TIFY10B/JAZ2, TIFY11A/JAZ5, TIFY5A/JAZ8, TIFY9/JAZ10 and TIFY3B/JAZ12. As to quaternary structure, (Microbial infection) Interacts with the pathogenic Pseudomonas syringae HopZ1a protein. In terms of processing, (Microbial infection) Acetylated by Pseudomonas syringae HopZ1a. Post-translationally, ubiquitinated. Targeted for degradation by the SCF(COI1) E3 ubiquitin ligase-proteasome pathway during jasmonate signaling.

It localises to the nucleus. The protein localises to the cell membrane. In terms of biological role, repressor of jasmonate responses. In Arabidopsis thaliana (Mouse-ear cress), this protein is Protein TIFY 11B.